Here is a 367-residue protein sequence, read N- to C-terminus: Mitogen-activated protein kinase 12 (367 aa).

The Protein kinase domain maps to 27–311 (YQDLQPVGSG…AAEALAHPYF (285 aa)). ATP contacts are provided by residues 33-41 (VGSGAYGAV) and Lys56. Catalysis depends on Asp153, which acts as the Proton acceptor. Position 183 is a phosphothreonine; by MAP2K3 and MAP2K6 (Thr183). The short motif at 183-185 (TGY) is the TXY element. A Phosphotyrosine; by MAP2K3 and MAP2K6 modification is found at Tyr185.

It belongs to the protein kinase superfamily. CMGC Ser/Thr protein kinase family. MAP kinase subfamily. Monomer. Interacts with the PDZ domain of the syntrophin SNTA1. Interacts with LIN7C, SCRIB, SYNJ2BP and SH3BP5. Interacts with PTPN4; this interaction induces the activation of PTPN4 phosphatase activity. It depends on Mg(2+) as a cofactor. Post-translationally, dually phosphorylated on Thr-183 and Tyr-185 by MAP2K3/MKK3 and MAP2K6/MKK6, which activates the enzyme. Ubiquitinated. Ubiquitination leads to degradation by the proteasome pathway. In terms of tissue distribution, highly expressed in skeletal muscle, lung and testes and also in the heart and thymus of both adult and neonatal rats.

It is found in the cytoplasm. The protein localises to the nucleus. It localises to the mitochondrion. The enzyme catalyses L-seryl-[protein] + ATP = O-phospho-L-seryl-[protein] + ADP + H(+). It carries out the reaction L-threonyl-[protein] + ATP = O-phospho-L-threonyl-[protein] + ADP + H(+). Its activity is regulated as follows. Activated by phosphorylation on threonine and tyrosine. MAP2K3/MKK3 and MAP2K6/MKK6 are both essential for the activation of MAPK12 induced by environmental stress, whereas MAP2K6/MKK6 is the major MAPK12 activator in response to TNF-alpha. Functionally, serine/threonine kinase which acts as an essential component of the MAP kinase signal transduction pathway. MAPK12 is one of the four p38 MAPKs which play an important role in the cascades of cellular responses evoked by extracellular stimuli such as pro-inflammatory cytokines or physical stress leading to direct activation of transcription factors such as ELK1 and ATF2. Accordingly, p38 MAPKs phosphorylate a broad range of proteins and it has been estimated that they may have approximately 200 to 300 substrates each. Some of the targets are downstream kinases such as MAPKAPK2, which are activated through phosphorylation and further phosphorylate additional targets. Plays a role in myoblast differentiation and also in the down-regulation of cyclin D1 in response to hypoxia in adrenal cells suggesting MAPK12 may inhibit cell proliferation while promoting differentiation. Phosphorylates DLG1. Following osmotic shock, MAPK12 in the cell nucleus increases its association with nuclear DLG1, thereby causing dissociation of DLG1-SFPQ complexes. This function is independent of its catalytic activity and could affect mRNA processing and/or gene transcription to aid cell adaptation to osmolarity changes in the environment. Regulates UV-induced checkpoint signaling and repair of UV-induced DNA damage and G2 arrest after gamma-radiation exposure. MAPK12 is involved in the regulation of SLC2A1 expression and basal glucose uptake in L6 myotubes; and negatively regulates SLC2A4 expression and contraction-mediated glucose uptake in adult skeletal muscle. C-Jun (JUN) phosphorylation is stimulated by MAPK14 and inhibited by MAPK12, leading to a distinct AP-1 regulation. MAPK12 is required for the normal kinetochore localization of PLK1, prevents chromosomal instability and supports mitotic cell viability. MAPK12-signaling is also positively regulating the expansion of transient amplifying myogenic precursor cells during muscle growth and regeneration. In Rattus norvegicus (Rat), this protein is Mitogen-activated protein kinase 12 (Mapk12).